The chain runs to 100 residues: Small ribosomal subunit protein uS14 (100 aa).

It belongs to the universal ribosomal protein uS14 family. As to quaternary structure, part of the 30S ribosomal subunit. Contacts proteins S3 and S10.

Binds 16S rRNA, required for the assembly of 30S particles and may also be responsible for determining the conformation of the 16S rRNA at the A site. In Picosynechococcus sp. (strain ATCC 27264 / PCC 7002 / PR-6) (Agmenellum quadruplicatum), this protein is Small ribosomal subunit protein uS14.